The sequence spans 388 residues: Succinate--CoA ligase [ADP-forming] subunit beta (388 aa).

One can recognise an ATP-grasp domain in the interval 9–244 (KSLFAEYGLP…PSQDDAREAH (236 aa)). ATP-binding positions include Lys-46, 53–55 (GRG), Glu-99, Thr-102, and Glu-107. Mg(2+) is bound by residues Asn-199 and Asp-213. Substrate is bound by residues Asn-264 and 321-323 (GIV).

Belongs to the succinate/malate CoA ligase beta subunit family. As to quaternary structure, heterotetramer of two alpha and two beta subunits. Mg(2+) serves as cofactor.

The enzyme catalyses succinate + ATP + CoA = succinyl-CoA + ADP + phosphate. It carries out the reaction GTP + succinate + CoA = succinyl-CoA + GDP + phosphate. Its pathway is carbohydrate metabolism; tricarboxylic acid cycle; succinate from succinyl-CoA (ligase route): step 1/1. Its function is as follows. Succinyl-CoA synthetase functions in the citric acid cycle (TCA), coupling the hydrolysis of succinyl-CoA to the synthesis of either ATP or GTP and thus represents the only step of substrate-level phosphorylation in the TCA. The beta subunit provides nucleotide specificity of the enzyme and binds the substrate succinate, while the binding sites for coenzyme A and phosphate are found in the alpha subunit. The polypeptide is Succinate--CoA ligase [ADP-forming] subunit beta (Shewanella frigidimarina (strain NCIMB 400)).